Consider the following 755-residue polypeptide: MSGLLGKSSPAKRVDGNNDLPMYYVNPMSVEPQGRPSDTTRVSVTFAEHLMNVEDARNDESASSRALGIASPINSAASSFNSWASAPASSISSSPFVLSFTDLTYSVKIQKKFNPLACCRRSGNDSSVNTKILLNGISGEAREGEMMAVLGASGSGKSTLIDALANRIAKDSLRGSITLNGEVLESSMQKVISAYVMQDDLLFPMLTVEETLMFSAEFRLPRSLSKKKKKARVQALIDQLGLRSAAKTVIGDEGHRGVSGGERRRVSIGNDIIHDPIILFLDEPTSGLDSTSAYMVIKVLQRIAQSGSIVIMSIHQPSYRIMGLLDQLIFLSKGNTVYSGSPTHLPQFFSEFKHPIPENENKTEFALDLIRELEYSTEGTKPLVEFHKQWRAKQAPSYNNNNKRNTNVSSLKEAITASISRGKLVSGATNNNSSNLTPSFQTFANPFWIEMIVIGKRAILNSRRQPELLGMRLGAVMVTGIILATMFTNLDNSPKGAQERLGFFAFAMSTTFYTCAEAIPVFLQERYIFMRETAYNAYRRSSYVLSQSIISIPALIVLSASFAATTFWAVGLDGGANGFFFFYFTILASFWAGSSFVTFLSGVIPNVMLGFTVVVAILAYFLLFSGFFISRDRIPVYWLWFHYISLVKYPYEGVLQNEFQNPTRCFARGVQLFDNSPLGEFPNDVKVNLLKSMSGVLGTNVTAETCVTTGIDILKQQGITDISKWNCLWITVAWGFFFRVLFYFTLLIGSKNKRK.

In terms of domain architecture, ABC transporter spans 98–358; the sequence is LSFTDLTYSV…FSEFKHPIPE (261 aa). 151 to 158 contributes to the ATP binding site; that stretch reads GASGSGKS. Residues 449–659 form the ABC transmembrane type-2 domain; that stretch reads IEMIVIGKRA…PYEGVLQNEF (211 aa). 6 helical membrane passes run 468 to 488, 503 to 523, 552 to 572, 579 to 599, 609 to 629, and 728 to 748; these read LLGMRLGAVMVTGIILATMFT, FFAFAMSTTFYTCAEAIPVFL, IPALIVLSASFAATTFWAVGL, FFFFYFTILASFWAGSSFVTF, LGFTVVVAILAYFLLFSGFFI, and LWITVAWGFFFRVLFYFTLLI.

This sequence belongs to the ABC transporter superfamily. ABCG family. Eye pigment precursor importer (TC 3.A.1.204) subfamily.

The protein resides in the membrane. This chain is ABC transporter G family member 2 (ABCG2), found in Arabidopsis thaliana (Mouse-ear cress).